Consider the following 769-residue polypeptide: Endothelin-converting enzyme 1 (769 aa).

Over M1–R67 the chain is Cytoplasmic. T24 bears the Phosphothreonine mark. A helical; Signal-anchor for type II membrane protein transmembrane segment spans residues L68–I88. Residues Q89–W769 are Extracellular-facing. The 673-residue stretch at V97–W769 folds into the Peptidase M13 domain. Disulfide bonds link C98/C103, C121/C754, C129/C714, C184/C434, and C643/C766. N-linked (GlcNAc...) asparagine glycans are attached at residues N165, N186, N209, N269, N315, N361, N382, and N538. H606 contacts Zn(2+). The active site involves E607. H610 is a binding site for Zn(2+). 2 N-linked (GlcNAc...) asparagine glycosylation sites follow: N631 and N650. Position 666 (E666) interacts with Zn(2+). D670 acts as the Proton donor in catalysis.

It belongs to the peptidase M13 family. Homodimer; disulfide-linked. Interacts with PPP1R16B. Interacts with TSPAN8; this interaction recruits the endothelin converting enzyme ECE1 to tetraspanin-enriched microdomains and positively modulates its enzymatic activity. Zn(2+) is required as a cofactor.

It localises to the cell membrane. The enzyme catalyses Hydrolysis of the 21-Trp-|-Val-22 bond in big endothelin to form endothelin 1.. Inhibited by phosphoramidon. Its function is as follows. Converts big endothelin-1 to endothelin-1. The polypeptide is Endothelin-converting enzyme 1 (Ece1) (Mus musculus (Mouse)).